The primary structure comprises 100 residues: Putative antiporter subunit mnhF2 (100 aa).

3 consecutive transmembrane segments (helical) span residues 5–25 (ITHI…IICL), 38–60 (VVTF…VLMG), and 70–92 (LIAI…GHVF).

The protein belongs to the CPA3 antiporters (TC 2.A.63) subunit F family. In terms of assembly, may form a heterooligomeric complex that consists of seven subunits: mnhA2, mnhB2, mnhC2, mnhD2, mnhE2, mnhF2 and mnhG2.

The protein localises to the cell membrane. This chain is Putative antiporter subunit mnhF2 (mnhF2), found in Staphylococcus aureus (strain USA300).